We begin with the raw amino-acid sequence, 308 residues long: Ornithine carbamoyltransferase (308 aa).

Carbamoyl phosphate is bound by residues 55–58, Q82, R106, and 133–136; these read STRT and HPCQ. Residues N164, D227, and 231-232 each bind L-ornithine; that span reads SM. Carbamoyl phosphate contacts are provided by residues 267 to 268 and R295; that span reads CL.

The protein belongs to the aspartate/ornithine carbamoyltransferase superfamily. OTCase family.

It localises to the cytoplasm. The enzyme catalyses carbamoyl phosphate + L-ornithine = L-citrulline + phosphate + H(+). The protein operates within amino-acid biosynthesis; L-arginine biosynthesis; L-arginine from L-ornithine and carbamoyl phosphate: step 1/3. Its function is as follows. Reversibly catalyzes the transfer of the carbamoyl group from carbamoyl phosphate (CP) to the N(epsilon) atom of ornithine (ORN) to produce L-citrulline. The protein is Ornithine carbamoyltransferase of Prochlorococcus marinus subsp. pastoris (strain CCMP1986 / NIES-2087 / MED4).